A 697-amino-acid polypeptide reads, in one-letter code: DNA ligase (697 aa).

NAD(+) is bound by residues 36 to 40, 85 to 86, and glutamate 123; these read DAEYD and SL. The active-site N6-AMP-lysine intermediate is lysine 125. Residues arginine 146, glutamate 182, lysine 320, and lysine 344 each contribute to the NAD(+) site. Positions 438, 441, 456, and 462 each coordinate Zn(2+). The region spanning 619-697 is the BRCT domain; that stretch reads PQGNTLAGKT…EDGLKALLGV (79 aa).

Belongs to the NAD-dependent DNA ligase family. LigA subfamily. Mg(2+) is required as a cofactor. The cofactor is Mn(2+).

It catalyses the reaction NAD(+) + (deoxyribonucleotide)n-3'-hydroxyl + 5'-phospho-(deoxyribonucleotide)m = (deoxyribonucleotide)n+m + AMP + beta-nicotinamide D-nucleotide.. In terms of biological role, DNA ligase that catalyzes the formation of phosphodiester linkages between 5'-phosphoryl and 3'-hydroxyl groups in double-stranded DNA using NAD as a coenzyme and as the energy source for the reaction. It is essential for DNA replication and repair of damaged DNA. In Bordetella petrii (strain ATCC BAA-461 / DSM 12804 / CCUG 43448), this protein is DNA ligase.